The chain runs to 266 residues: Enoyl-CoA hydratase EchA19 (266 aa).

Residue Glu120 is part of the active site. Residue Lys135 is modified to N6-succinyllysine. Glu140 is a catalytic residue. Position 142 is an N6-succinyllysine (Lys142).

Belongs to the enoyl-CoA hydratase/isomerase family. As to quaternary structure, homotrimer; substrate probably binds in elongated tunnels between the subunits. Succinylated in vitro at pH 8.1, succinylation reduces specific activity of the enzyme 5.5-fold; succinyl-CoA is a downstream by-product of cholesterol degradation. Can be de-succinylated in vitro by NAD-dependent protein deacylase (AC P9WGG3). Succinylation may be a negative feedback regulator of cholesterol metabolism.

The catalysed reaction is (22E)-3-oxochola-4,22-dien-24-oyl-CoA + H2O = (22R)-hydroxy-3-oxo-chol-4-ene-24-oyl-CoA. The protein operates within steroid metabolism; cholesterol degradation. Its function is as follows. Degradation of the cholesterol side chain involves 3 multistep beta-oxidation cycles, this may be involved in the second cycle. Hydrates 3-OCDO-CoA ((22E)-3-oxo-chol-4,22-dien-24-oyl-CoA) to make (22R)-HOCO-CoA (3-oxo-chol-4-ene-(22R)-hydroxy-24-oyl-CoA). Also acts on octenoyl-CoA. Not active on (E)-3-OCDS-CoA ((E)-3-oxocholest-4,24-dien-26-oyl-CoA) or 3-OPDC-CoA (3-oxo-4,17-pregnadiene-20-carboxyl-CoA). Hydrates the same substrate as ChsH3, but the 2 enzymes make different stereoisomers of the product. This is Enoyl-CoA hydratase EchA19 from Mycobacterium tuberculosis (strain ATCC 25618 / H37Rv).